A 189-amino-acid chain; its full sequence is dTTP/UTP pyrophosphatase (189 aa).

Asp-64 functions as the Proton acceptor in the catalytic mechanism.

It belongs to the Maf family. YhdE subfamily. A divalent metal cation serves as cofactor.

The protein localises to the cytoplasm. The catalysed reaction is dTTP + H2O = dTMP + diphosphate + H(+). It carries out the reaction UTP + H2O = UMP + diphosphate + H(+). In terms of biological role, nucleoside triphosphate pyrophosphatase that hydrolyzes dTTP and UTP. May have a dual role in cell division arrest and in preventing the incorporation of modified nucleotides into cellular nucleic acids. The polypeptide is dTTP/UTP pyrophosphatase (Syntrophomonas wolfei subsp. wolfei (strain DSM 2245B / Goettingen)).